The chain runs to 90 residues: MKVRPLGARLLIKPIQEEKRTEGGIVLPDTAKEKPMKAEVVAVGNLEDSDVDIVVGDKVIFSKYSGTEIKIEDDDYIIIDVEDILAKIED.

It belongs to the GroES chaperonin family. As to quaternary structure, heptamer of 7 subunits arranged in a ring. Interacts with the chaperonin GroEL.

The protein localises to the cytoplasm. Functionally, together with the chaperonin GroEL, plays an essential role in assisting protein folding. The GroEL-GroES system forms a nano-cage that allows encapsulation of the non-native substrate proteins and provides a physical environment optimized to promote and accelerate protein folding. GroES binds to the apical surface of the GroEL ring, thereby capping the opening of the GroEL channel. This chain is Co-chaperonin GroES, found in Thermosipho melanesiensis (strain DSM 12029 / CIP 104789 / BI429).